The sequence spans 290 residues: MNHFVYLMDKYGNPYSFSLKPKYYKTLVLSGGAMRGVYLLGALNGLKIKINKISTFIGISSGSIICFLLSIGYTPYEIFISLLKYDNLLTINLDKLYSGDTRNEGGLFSSENIFKHLETQMRLKEISRSITFKEHFEKTGKILIVMAFNITKCKEDIFTYETTPDMEILNSLKLSARIPIIFGPIKYNNNFYIDGGVWNNFPIDIAIKYHNKKNKKKSDWIIAVTTLFSTYKQNIHQWYKFSNINIVMVNDTPDLNPSLVSSDLEKLTMFNKGEEKASLIKKQNIRRNSI.

2 helical membrane passes run 26–46 and 53–73; these read TLVL…LNGL and ISTF…SIGY. A PNPLA domain is found at 27–207; sequence LVLSGGAMRG…WNNFPIDIAI (181 aa). The short motif at 58 to 62 is the GXSXG element; that stretch reads GISSG. The active-site Nucleophile is S60. The Proton acceptor role is filled by D194. The DGA/G signature appears at 194-196; sequence DGG.

It localises to the membrane. Probable lipid hydrolase. The sequence is that of Probable lipid hydrolase 463L from Invertebrate iridescent virus 6 (IIV-6).